The chain runs to 607 residues: Autophagy-related protein 16-1 (607 aa).

The tract at residues 13 to 43 (WKRHIAEELRRRDRLQRQAFEEIILQYTKLL) is interaction with ATG5. Residues 79–230 (DSQLQEMAQL…QKELAEAAKE (152 aa)) adopt a coiled-coil conformation. Position 139 is a phosphoserine (Ser-139). Residues 207 to 230 (AENEKDSRRRQARLQKELAEAAKE) form a WIPI2-binding region. An RB1CC1-binding region spans residues 230–242 (EPLPVEQDDDIEV). A phosphoserine mark is found at Ser-269 and Ser-287. Positions 296–299 (DIMD) match the Caspase cleavage motif. 7 WD repeats span residues 320–359 (AHDG…CEFK), 364–403 (GSNA…LRHT), 406–445 (GHSG…CIKT), 447–484 (FAGS…VVRE), 486–525 (ELLG…VKQT), 532–573 (KCGS…KVLS), and 575–607 (QHSS…WAQP).

This sequence belongs to the WD repeat ATG16 family. In terms of assembly, homodimer. Homooligomer. Heterooligomer with ATG16L2. Interacts with WIPI1. Interacts with WIPI2. Interacts with RB1CC1; the interaction is required for ULK1 complex-dependent autophagy. Interacts with ATG5. Part of the minor complex composed of 4 sets of ATG12-ATG5 and ATG16L1 (400 kDa); this complex interacts with ATG3 leading to disruption of ATG7 interaction and promotion of ATG8-like proteins lipidation. Part of the major complex composed of 8 sets of ATG12-ATG5 and ATG16L1 (800 kDa). Interacts with RAB33B (GTP- and GDP-bound forms); the complex consists of a tetramer where two RAB33B molecules bind independently one molecule of the ATG16L1 homodimer; the interaction promotes ATG12-ATG5-ATG16L1 complex recruitment to phagophores. Interacts (via WD repeats) with TMEM59; the interaction mediates unconventional autophagic activity of TMEM59. Interacts with TLR2. Interacts (via WD repeats) with MEFV. Interacts (via N-terminal) with CLTC. Interacts with NOD1. Interacts with NOD2. Interacts with TUFM. Interacts with TRIM16. Interacts (via WD repeats) with SPATA33. Interacts with Irgm1. Proteolytic cleavage by activated CASP3 leads to degradation and may regulate autophagy upon cellular stress and apoptotic stimuli. Post-translationally, phosphorylation at Ser-139 promotes association with the ATG12-ATG5 conjugate to form the ATG12-ATG5-ATG16L1 complex. Widely expressed. Expressed in the testis and sperm midpiece (at protein level). As to expression, expressed in liver. In terms of tissue distribution, highly expressed in liver. Expressed in brain.

It is found in the cytoplasm. The protein localises to the preautophagosomal structure membrane. It localises to the endosome membrane. The protein resides in the lysosome membrane. Its function is as follows. Plays an essential role in both canonical and non-canonical autophagy: interacts with ATG12-ATG5 to mediate the lipidation to ATG8 family proteins (MAP1LC3A, MAP1LC3B, MAP1LC3C, GABARAPL1, GABARAPL2 and GABARAP). Acts as a molecular hub, coordinating autophagy pathways via distinct domains that support either canonical or non-canonical signaling. During canonical autophagy, interacts with ATG12-ATG5 to mediate the conjugation of phosphatidylethanolamine (PE) to ATG8 proteins, to produce a membrane-bound activated form of ATG8. Thereby, controls the elongation of the nascent autophagosomal membrane. As part of the ATG8 conjugation system with ATG5 and ATG12, required for recruitment of LRRK2 to stressed lysosomes and induction of LRRK2 kinase activity in response to lysosomal stress. Also involved in non-canonical autophagy, a parallel pathway involving conjugation of ATG8 proteins to single membranes at endolysosomal compartments, probably by catalyzing conjugation of phosphatidylserine (PS) to ATG8. Non-canonical autophagy plays a key role in epithelial cells to limit lethal infection by influenza A (IAV) virus. Regulates mitochondrial antiviral signaling (MAVS)-dependent type I interferon (IFN-I) production. Negatively regulates NOD1- and NOD2-driven inflammatory cytokine response. Instead, promotes an autophagy-dependent antibacterial pathway together with NOD1 or NOD2. Plays a role in regulating morphology and function of Paneth cell. This Mus musculus (Mouse) protein is Autophagy-related protein 16-1.